Consider the following 345-residue polypeptide: UDP-3-O-acylglucosamine N-acyltransferase (345 aa).

The Proton acceptor role is filled by histidine 241.

Belongs to the transferase hexapeptide repeat family. LpxD subfamily. As to quaternary structure, homotrimer.

The enzyme catalyses a UDP-3-O-[(3R)-3-hydroxyacyl]-alpha-D-glucosamine + a (3R)-hydroxyacyl-[ACP] = a UDP-2-N,3-O-bis[(3R)-3-hydroxyacyl]-alpha-D-glucosamine + holo-[ACP] + H(+). It participates in bacterial outer membrane biogenesis; LPS lipid A biosynthesis. Catalyzes the N-acylation of UDP-3-O-acylglucosamine using 3-hydroxyacyl-ACP as the acyl donor. Is involved in the biosynthesis of lipid A, a phosphorylated glycolipid that anchors the lipopolysaccharide to the outer membrane of the cell. The chain is UDP-3-O-acylglucosamine N-acyltransferase from Desulfotalea psychrophila (strain LSv54 / DSM 12343).